The following is a 510-amino-acid chain: NAD(P)H-quinone oxidoreductase subunit 2 A, chloroplastic (510 aa).

12 helical membrane-spanning segments follow: residues Phe-31–Thr-51, Trp-59–Trp-79, Ile-99–Ile-119, Met-124–Cys-144, Leu-149–Tyr-169, Tyr-183–Gly-203, Ile-229–Phe-249, Trp-295–Ile-315, Met-323–Asp-343, Tyr-354–Leu-374, Ala-395–Phe-415, and Leu-418–Leu-438.

Belongs to the complex I subunit 2 family. NDH is composed of at least 16 different subunits, 5 of which are encoded in the nucleus.

It is found in the plastid. The protein localises to the chloroplast thylakoid membrane. The enzyme catalyses a plastoquinone + NADH + (n+1) H(+)(in) = a plastoquinol + NAD(+) + n H(+)(out). It catalyses the reaction a plastoquinone + NADPH + (n+1) H(+)(in) = a plastoquinol + NADP(+) + n H(+)(out). NDH shuttles electrons from NAD(P)H:plastoquinone, via FMN and iron-sulfur (Fe-S) centers, to quinones in the photosynthetic chain and possibly in a chloroplast respiratory chain. The immediate electron acceptor for the enzyme in this species is believed to be plastoquinone. Couples the redox reaction to proton translocation, and thus conserves the redox energy in a proton gradient. The sequence is that of NAD(P)H-quinone oxidoreductase subunit 2 A, chloroplastic from Saccharum officinarum (Sugarcane).